We begin with the raw amino-acid sequence, 185 residues long: Large ribosomal subunit protein uL5 (185 aa).

Belongs to the universal ribosomal protein uL5 family. In terms of assembly, part of the 50S ribosomal subunit; part of the 5S rRNA/L5/L18/L25 subcomplex. Contacts the 5S rRNA and the P site tRNA. Forms a bridge to the 30S subunit in the 70S ribosome.

This is one of the proteins that bind and probably mediate the attachment of the 5S RNA into the large ribosomal subunit, where it forms part of the central protuberance. In the 70S ribosome it contacts protein S13 of the 30S subunit (bridge B1b), connecting the 2 subunits; this bridge is implicated in subunit movement. Contacts the P site tRNA; the 5S rRNA and some of its associated proteins might help stabilize positioning of ribosome-bound tRNAs. This is Large ribosomal subunit protein uL5 from Bartonella henselae (strain ATCC 49882 / DSM 28221 / CCUG 30454 / Houston 1) (Rochalimaea henselae).